Reading from the N-terminus, the 194-residue chain is GTP cyclohydrolase 1 (194 aa).

C85, H88, and C156 together coordinate Zn(2+).

It belongs to the GTP cyclohydrolase I family. As to quaternary structure, toroid-shaped homodecamer, composed of two pentamers of five dimers.

It catalyses the reaction GTP + H2O = 7,8-dihydroneopterin 3'-triphosphate + formate + H(+). It participates in cofactor biosynthesis; 7,8-dihydroneopterin triphosphate biosynthesis; 7,8-dihydroneopterin triphosphate from GTP: step 1/1. This Bacteroides fragilis (strain YCH46) protein is GTP cyclohydrolase 1.